Consider the following 487-residue polypeptide: N-succinylglutamate 5-semialdehyde dehydrogenase (487 aa).

G221–G226 lines the NAD(+) pocket. Residues E244 and C278 contribute to the active site.

Belongs to the aldehyde dehydrogenase family. AstD subfamily.

The enzyme catalyses N-succinyl-L-glutamate 5-semialdehyde + NAD(+) + H2O = N-succinyl-L-glutamate + NADH + 2 H(+). The protein operates within amino-acid degradation; L-arginine degradation via AST pathway; L-glutamate and succinate from L-arginine: step 4/5. Its function is as follows. Catalyzes the NAD-dependent reduction of succinylglutamate semialdehyde into succinylglutamate. The polypeptide is N-succinylglutamate 5-semialdehyde dehydrogenase (Burkholderia vietnamiensis (strain G4 / LMG 22486) (Burkholderia cepacia (strain R1808))).